The following is a 188-amino-acid chain: Ribosomal RNA small subunit methyltransferase G (188 aa).

S-adenosyl-L-methionine-binding positions include glycine 69, phenylalanine 74, 119–120 (VQ), and arginine 134.

It belongs to the methyltransferase superfamily. RNA methyltransferase RsmG family.

The protein resides in the cytoplasm. It catalyses the reaction guanosine(527) in 16S rRNA + S-adenosyl-L-methionine = N(7)-methylguanosine(527) in 16S rRNA + S-adenosyl-L-homocysteine. Specifically methylates the N7 position of guanine in position 527 of 16S rRNA. This chain is Ribosomal RNA small subunit methyltransferase G, found in Campylobacter jejuni (strain RM1221).